A 463-amino-acid chain; its full sequence is Cysteine--tRNA ligase (463 aa).

Residue Cys29 participates in Zn(2+) binding. A 'HIGH' region motif is present at residues 31-41; it reads PTVYDFAHIGN. Cys227, His252, and Glu256 together coordinate Zn(2+). The 'KMSKS' region signature appears at 285 to 289; sequence KMSKS. Lys288 provides a ligand contact to ATP.

The protein belongs to the class-I aminoacyl-tRNA synthetase family. Monomer. Zn(2+) serves as cofactor.

Its subcellular location is the cytoplasm. The catalysed reaction is tRNA(Cys) + L-cysteine + ATP = L-cysteinyl-tRNA(Cys) + AMP + diphosphate. This is Cysteine--tRNA ligase from Rhodopseudomonas palustris (strain ATCC BAA-98 / CGA009).